Here is a 928-residue protein sequence, read N- to C-terminus: Heme/hemopexin-binding protein (928 aa).

Residues 1–21 (MYKLNVISLIILTTCSGAAYA) form the signal peptide. 10 tandem repeats follow at residues 101 to 106 (NGKVYL), 149 to 154 (KDRQVL), 155 to 160 (KEGLVL), 161 to 166 (KDGQVV), 167 to 172 (KEGQVI), 205 to 210 (NGKVYL), 279 to 284 (NGKVVL), 410 to 415 (NGKVNL), 635 to 640 (NGFVHL), and 674 to 679 (NGKVSM). The segment at 101 to 679 (NGKVYLANPN…RLGMNGKVSM (579 aa)) is 6 X 6 AA approximate repeats. Residues 149–172 (KDRQVLKEGLVLKDGQVVKEGQVI) are 4 X 6 AA approximate tandem repeats.

It localises to the secreted. Binds heme/hemopexin complexes. The polypeptide is Heme/hemopexin-binding protein (hxuA) (Haemophilus influenzae).